Consider the following 368-residue polypeptide: CST complex subunit STN1 (368 aa).

Residues 1 to 185 (MQPGSSRCEE…KVYDQPFHSS (185 aa)) form an interaction with CTC1 region. The segment at residues 57 to 155 (VDVLGTVIGV…EIHATTYYKV (99 aa)) is a DNA-binding region (OB). 2 winged helix-turn-helix (wHTH) regions span residues 191–295 (EALS…YVTR) and 296–368 (EDKD…YTAF).

It belongs to the STN1 family. Component of the CST complex, composed of TEN1/C17orf106, CTC1/C17orf68 and STN1; in the complex interacts directly with TEN1 and CTC1. Interacts with ACD/TPP1, POT1 and POLA1.

It localises to the nucleus. Its subcellular location is the chromosome. The protein localises to the telomere. Component of the CST complex proposed to act as a specialized replication factor promoting DNA replication under conditions of replication stress or natural replication barriers such as the telomere duplex. The CST complex binds single-stranded DNA with high affinity in a sequence-independent manner, while isolated subunits bind DNA with low affinity by themselves. Initially the CST complex has been proposed to protect telomeres from DNA degradation. However, the CST complex has been shown to be involved in several aspects of telomere replication. The CST complex inhibits telomerase and is involved in telomere length homeostasis; it is proposed to bind to newly telomerase-synthesized 3' overhangs and to terminate telomerase action implicating the association with the ACD:POT1 complex thus interfering with its telomerase stimulation activity. The CST complex is also proposed to be involved in fill-in synthesis of the telomeric C-strand probably implicating recruitment and activation of DNA polymerase alpha. The CST complex facilitates recovery from many forms of exogenous DNA damage; seems to be involved in the re-initiation of DNA replication at repaired forks and/or dormant origins. Required for efficicient replication of the duplex region of the telomere. Promotes efficient replication of lagging-strand telomeres. Promotes general replication start following replication-fork stalling implicating new origin firing. May be in involved in C-strand fill-in during late S/G2 phase independent of its role in telomere duplex replication. Functionally, component of the CST complex, a complex that binds to single-stranded DNA and is required to protect telomeres from DNA degradation. The CST complex binds single-stranded DNA with high affinity in a sequence-independent manner, while isolated subunits bind DNA with low affinity by themselves. In addition to telomere protection, the CST complex has probably a more general role in DNA metabolism at non-telomeric sites. In Homo sapiens (Human), this protein is CST complex subunit STN1.